The following is a 224-amino-acid chain: MIKIENLTKSYRTPTGRHYVFKDLNIEIPSGKSVAFIGRNGAGKSTLLRMIGGIDRPDSGKIITNKTISWPVGLAGGFQGSLTGRENVKFVARLYAKQEELKEKIEFVEEFAELGKYFDMPIKTYSSGMRSRLGFGLSMAFKFDYYIVDEVTAVGDARFKEKCAQLFKERHKESSFLMVSHSLNSLKEFCDVAIVFKNSYIIGYYENVQSGIDEYKMYQDLDIE.

An ABC transporter domain is found at 2–223 (IKIENLTKSY…EYKMYQDLDI (222 aa)). 38–45 (GRNGAGKS) is a binding site for ATP.

It belongs to the ABC transporter superfamily.

Its subcellular location is the cell inner membrane. Its function is as follows. Putative ATP-binding protein, and an energy coupling component for the transport of polysialic acid across the cytoplasmic membrane. The chain is Polysialic acid transport ATP-binding protein KpsT (kpsT) from Escherichia coli.